Here is a 561-residue protein sequence, read N- to C-terminus: Putative transport protein Ent638_1362 (561 aa).

Helical transmembrane passes span 8 to 28 (LLNG…LCLG), 32 to 52 (LGSV…LLGQ), 66 to 86 (FMLF…SIFF), 94 to 114 (MLAL…GKLF), and 158 to 178 (HLSL…IVAA). RCK C-terminal domains are found at residues 202–288 (LDTD…SFRN) and 292–373 (VFDR…RIGF). The next 5 membrane-spanning stretches (helical) occupy residues 383–403 (LLAF…TFQF), 406–426 (FSFG…LGFL), 447–467 (FGLM…IGHS), 475–495 (MLVA…LFGA), and 540–560 (AIAN…WPGL).

This sequence belongs to the AAE transporter (TC 2.A.81) family. YbjL subfamily.

It localises to the cell membrane. This chain is Putative transport protein Ent638_1362, found in Enterobacter sp. (strain 638).